The sequence spans 827 residues: Cytosolic Fe-S cluster assembly factor NAR1 (827 aa).

Cys-22 is a binding site for [4Fe-4S] cluster. Positions 57 to 77 (AYYESSTPPSSSLSAADSRPR) are disordered. Residues 61 to 73 (SSTPPSSSLSAAD) are compositionally biased toward low complexity. Residues Cys-92, Cys-95, and Cys-98 each contribute to the [4Fe-4S] cluster site. Residues 209–231 (RENARKRAKLSNAPADDDDRLHP) are disordered. Cys-246, Cys-307, Cys-591, and Cys-595 together coordinate [4Fe-4S] cluster. Disordered stretches follow at residues 599-637 (GGQI…WAAD) and 709-739 (DQGG…NAKS). Polar residues-rich tracts occupy residues 604-621 (PPTQ…TVDN) and 713-738 (ANDS…SNAK).

This sequence belongs to the NARF family.

Functionally, component of the cytosolic Fe/S protein assembly machinery. Required for maturation of extramitochondrial Fe/S proteins. May play a role in the transfer of pre-assembled Fe/S clusters to target apoproteins. The protein is Cytosolic Fe-S cluster assembly factor NAR1 (NAR1) of Mycosarcoma maydis (Corn smut fungus).